A 303-amino-acid chain; its full sequence is MKILRTPDSRFANLPDYNFDPHYLMVDDSEDSELRVHYLDEGPRDADPVLLLHGEPSWCYLYRKMIPILTAAGHRVIAPDLPGFGRSDKPASRTDYTYQRHVNWMQSVLDQLDLNNITLFCQDWGGLIGLRLVAENPDRFARVAAGNTMLPTGDHDLGEGFRKWQQFSQEIPQFHVGGTIKSGTVTKLSQAVIDAYNAPFPDESYKEGARQFPLLVPSTPDDPASENNRAAWIELSKWTKPFITLFSDSDPVTAGGDRIMQKIIPGTKGQAHTTIANGGHFLQEDQGEKVAKLLVQFIHDNPR.

One can recognise an AB hydrolase-1 domain in the interval 48–192 (PVLLLHGEPS…GTVTKLSQAV (145 aa)). The Nucleophile role is filled by aspartate 123. The active-site Proton donor is the aspartate 250. The active-site Proton acceptor is histidine 280.

The protein belongs to the haloalkane dehalogenase family. Type 1 subfamily. As to quaternary structure, monomer.

The catalysed reaction is 1-haloalkane + H2O = a halide anion + a primary alcohol + H(+). Catalyzes hydrolytic cleavage of carbon-halogen bonds in halogenated aliphatic compounds, leading to the formation of the corresponding primary alcohols, halide ions and protons. The sequence is that of Haloalkane dehalogenase from Psychrobacter cryohalolentis (strain ATCC BAA-1226 / DSM 17306 / VKM B-2378 / K5).